The primary structure comprises 2671 residues: Stalled ribosome sensor GCN1 (2671 aa).

A2 bears the N-acetylalanine mark. HEAT repeat units lie at residues 140 to 178 (NKLV…ENPG), 257 to 293 (EFKD…LDLS), 294 to 331 (QYAL…QCSD), 385 to 423 (CVAE…EVPK), 425 to 459 (LTDW…GDTL), 460 to 500 (LQAL…SKLS), 560 to 597 (SKVQ…SLGG), 599 to 636 (KLAN…MGKT), 700 to 732 (AFIT…SLSV), and 733 to 772 (LSPD…PAGE). Position 729 is a phosphoserine (S729). A Phosphoserine modification is found at S786. Residues 804–865 (QIIEMELKEE…EAALGLLDAI (62 aa)) are a coiled coil. 37 HEAT repeats span residues 879 to 918 (VLVD…TLGT), 979 to 1016 (SLVF…HAQL), 1035 to 1072 (LPRV…SSSG), 1078 to 1115 (FAEQ…VLPS), 1155 to 1192 (DLQS…RYQR), 1210 to 1250 (YRPP…YLDS), 1251 to 1289 (SQVK…AHGK), 1290 to 1332 (ENVN…HLDK), 1335 to 1372 (PKVK…AVKE), 1374 to 1410 (AGGM…GLGI), 1413 to 1451 (LKQQ…MLGK), 1455 to 1492 (PYVV…NLSA), 1493 to 1530 (HGVK…CAPK), 1534 to 1571 (SCLP…VIRN), 1573 to 1609 (EILA…HFID), 1611 to 1648 (PSLA…LTDQ), 1653 to 1690 (PYLP…GMGE), 1692 to 1729 (CFED…GLGV), 1731 to 1769 (KLEK…TFGD), 1773 to 1810 (PYVG…MYAE), 1812 to 1848 (AIAL…HISG), 1921 to 1958 (EILP…KLGE), 1959 to 1996 (KILP…STSR), 2001 to 2038 (FFSE…TIGH), 2039 to 2074 (QALE…VKSR), 2076 to 2108 (VLPY…LTRH), 2111 to 2146 (VILP…VEDD), 2147 to 2184 (TGHR…RSKA), 2188 to 2225 (SHLR…KLDA), 2259 to 2296 (RGVT…LTSA), 2301 to 2338 (PSVV…GKVG), 2339 to 2380 (IALK…IHVK), 2382 to 2417 (DPLF…GAGS), 2422 to 2459 (AIRK…FLTD), 2546 to 2583 (QLPP…EPRP), 2588 to 2625 (QTIK…MRRG), and 2627 to 2661 (ELLQ…QADS). The RWDBD region stretch occupies residues 2260–2408 (GVTSILPVLR…GIRDTMLQAL (149 aa)). S2276 bears the Phosphoserine mark.

The protein belongs to the GCN1 family. In terms of assembly, interacts with EIF2AK4/GCN2; this interaction stimulates the EIF2AK4/GCN2 kinase activity and is impaired by IMPACT upon a variety of stress conditions, such as amino acid depletion, UV-C irradiation, proteasome inhibitor treatment and glucose deprivation. Interacts with IMPACT; this prevents the interaction of GCN1 with EIF2AK4/GCN2 and inhibits EIF2AK4/GCN2 kinase activity. Interacts with RNF14; interaction takes place following ribosome stalling and promotes recruitment of RNF14. In terms of tissue distribution, expressed in the hypothalamus, cortex and hippocampus.

Its subcellular location is the cytoplasm. In terms of biological role, ribosome collision sensor that plays a key role in the RNF14-RNF25 translation quality control pathway, a pathway that takes place when a ribosome has stalled during translation, and which promotes ubiquitination and degradation of translation factors on stalled ribosomes. Directly binds to the ribosome and acts as a sentinel for colliding ribosomes: activated following ribosome stalling and promotes recruitment of RNF14, which directly ubiquitinates EEF1A1/eEF1A, leading to its degradation. In addition to EEF1A1/eEF1A, the RNF14-RNF25 translation quality control pathway mediates degradation of ETF1/eRF1 and ubiquitination of ribosomal protein. GCN1 also acts as a positive activator of the integrated stress response (ISR) by mediating activation of EIF2AK4/GCN2 in response to amino acid starvation. Interaction with EIF2AK4/GCN2 on translating ribosomes stimulates EIF2AK4/GCN2 kinase activity, leading to phosphorylation of eukaryotic translation initiation factor 2 (eIF-2-alpha/EIF2S1). EIF2S1/eIF-2-alpha phosphorylation converts EIF2S1/eIF-2-alpha into a global protein synthesis inhibitor, leading to a global attenuation of cap-dependent translation, and thus to a reduced overall utilization of amino acids, while concomitantly initiating the preferential translation of ISR-specific mRNAs, such as the transcriptional activator ATF4, and hence allowing ATF4-mediated reprogramming of amino acid biosynthetic gene expression to alleviate nutrient depletion. This is Stalled ribosome sensor GCN1 from Mus musculus (Mouse).